The sequence spans 95 residues: Antitoxin VapB (95 aa).

Antitoxin component of a type II toxin-antitoxin (TA) system. Partially neutralizes the RNase activity of cognate toxin VapC. The protein is Antitoxin VapB of Rickettsia bellii (strain RML369-C).